A 69-amino-acid polypeptide reads, in one-letter code: Putative membrane protein insertion efficiency factor (69 aa).

Belongs to the UPF0161 family.

The protein localises to the cell inner membrane. Its function is as follows. Could be involved in insertion of integral membrane proteins into the membrane. This Geobacter sulfurreducens (strain ATCC 51573 / DSM 12127 / PCA) protein is Putative membrane protein insertion efficiency factor.